Here is a 116-residue protein sequence, read N- to C-terminus: Flagellar transcriptional regulator FlhD (116 aa).

It belongs to the FlhD family. Homodimer; disulfide-linked. Forms a heterohexamer composed of two FlhC and four FlhD subunits. Each FlhC binds a FlhD dimer, forming a heterotrimer, and a hexamer assembles by dimerization of two heterotrimers.

The protein resides in the cytoplasm. Functions in complex with FlhC as a master transcriptional regulator that regulates transcription of several flagellar and non-flagellar operons by binding to their promoter region. Activates expression of class 2 flagellar genes, including fliA, which is a flagellum-specific sigma factor that turns on the class 3 genes. Also regulates genes whose products function in a variety of physiological pathways. This Escherichia coli O9:H4 (strain HS) protein is Flagellar transcriptional regulator FlhD.